Consider the following 226-residue polypeptide: Large ribosomal subunit protein uL3 (226 aa).

The protein belongs to the universal ribosomal protein uL3 family. Part of the 50S ribosomal subunit. Forms a cluster with proteins L14 and L19.

In terms of biological role, one of the primary rRNA binding proteins, it binds directly near the 3'-end of the 23S rRNA, where it nucleates assembly of the 50S subunit. In Sulfurihydrogenibium sp. (strain YO3AOP1), this protein is Large ribosomal subunit protein uL3.